The chain runs to 132 residues: Small ribosomal subunit protein uS8 (132 aa).

The protein belongs to the universal ribosomal protein uS8 family. As to quaternary structure, part of the 30S ribosomal subunit. Contacts proteins S5 and S12.

One of the primary rRNA binding proteins, it binds directly to 16S rRNA central domain where it helps coordinate assembly of the platform of the 30S subunit. This Exiguobacterium sibiricum (strain DSM 17290 / CCUG 55495 / CIP 109462 / JCM 13490 / 255-15) protein is Small ribosomal subunit protein uS8.